Reading from the N-terminus, the 256-residue chain is uncharacterized protein (256 aa).

Residues 187–223 (MEEEEISEVEDALNVLQRLCAQEEGDNKEAETNNNNY) are a coiled coil.

This is an uncharacterized protein from Ostreid herpesvirus 1 (isolate France) (OsHV-1).